Here is a 732-residue protein sequence, read N- to C-terminus: Conidiogenone synthase (732 aa).

A terpene cyclase region spans residues M1 to V311. Residue D97 coordinates Mg(2+). Residues D97, R169 to D172, N213, S217 to E221, and R307 to Y308 contribute to the substrate site. The DDXXD 1 signature appears at D97–Q101. The NSE/DTE motif lies at N213–E221. The prenyltransferase stretch occupies residues D312–K732. The interval K348 to N370 is disordered. Positions 402, 405, and 434 each coordinate isopentenyl diphosphate. Residues D441 and D445 each coordinate Mg(2+). The short motif at D441–D445 is the DDXXD 2 element. R450 is a dimethylallyl diphosphate binding site. An isopentenyl diphosphate-binding site is contributed by R451. Dimethylallyl diphosphate is bound by residues K529, T530, Q565, N572, K582, and K592.

This sequence in the N-terminal section; belongs to the terpene synthase family. It in the C-terminal section; belongs to the FPP/GGPP synthase family. Hexamer. Mg(2+) is required as a cofactor.

It catalyses the reaction isopentenyl diphosphate + (2E,6E)-farnesyl diphosphate = (2E,6E,10E)-geranylgeranyl diphosphate + diphosphate. It participates in secondary metabolite biosynthesis; terpenoid biosynthesis. Bifunctional terpene synthase; part of the gene cluster that mediates the biosynthesis of conidiogenone, a diterpene known to induce the conidiation. The bifunctional terpene synthase PchDS converts isopentenyl diphosphate (IPP) and dimethylallyl diphosphate (DMAPP) into deoxyconidiogenol. The C-terminal prenyltransferase (PT) domain of PchDS catalyzes formation of GGPP, whereas the N-terminal terpene cyclase (TC) domain catalyzes the cyclization of GGPP into deoxyconidiogenol. The cytochrome P450 monooxygenase PchP450 then catalyzes two rounds of oxidation to furnish conidiogenone. The chain is Conidiogenone synthase from Penicillium rubens (strain ATCC 28089 / DSM 1075 / NRRL 1951 / Wisconsin 54-1255) (Penicillium chrysogenum).